Here is a 325-residue protein sequence, read N- to C-terminus: Tagatose 1,6-diphosphate aldolase 1 (325 aa).

Belongs to the aldolase LacD family.

It carries out the reaction D-tagatofuranose 1,6-bisphosphate = D-glyceraldehyde 3-phosphate + dihydroxyacetone phosphate. It participates in carbohydrate metabolism; D-tagatose 6-phosphate degradation; D-glyceraldehyde 3-phosphate and glycerone phosphate from D-tagatose 6-phosphate: step 2/2. This Streptococcus pyogenes serotype M3 (strain SSI-1) protein is Tagatose 1,6-diphosphate aldolase 1 (lacD1).